Consider the following 477-residue polypeptide: Asparaginyl-tRNA synthetase (477 aa).

Residues 1–14 (MLGARRLLGALRLC) constitute a mitochondrion transit peptide. K353 carries the post-translational modification N6-acetyllysine.

It belongs to the class-II aminoacyl-tRNA synthetase family. As to quaternary structure, homodimer. As to expression, expressed in brain and inner ear, including the cochlear epithelium and organ of Corti.

It localises to the mitochondrion matrix. It is found in the mitochondrion. It carries out the reaction tRNA(Asn) + L-asparagine + ATP = L-asparaginyl-tRNA(Asn) + AMP + diphosphate + H(+). Functionally, mitochondrial aminoacyl-tRNA synthetase that catalyzes the specific attachment of the asparagine amino acid (aa) to the homologous transfer RNA (tRNA), further participating in protein synthesis. The reaction occurs in a two steps: asparagine is first activated by ATP to form Asn-AMP and then transferred to the acceptor end of tRNA(Asn). The sequence is that of Asparaginyl-tRNA synthetase from Mus musculus (Mouse).